Here is a 177-residue protein sequence, read N- to C-terminus: ATP synthase subunit delta (177 aa).

Belongs to the ATPase delta chain family. F-type ATPases have 2 components, F(1) - the catalytic core - and F(0) - the membrane proton channel. F(1) has five subunits: alpha(3), beta(3), gamma(1), delta(1), epsilon(1). F(0) has three main subunits: a(1), b(2) and c(10-14). The alpha and beta chains form an alternating ring which encloses part of the gamma chain. F(1) is attached to F(0) by a central stalk formed by the gamma and epsilon chains, while a peripheral stalk is formed by the delta and b chains.

The protein resides in the cell inner membrane. Functionally, f(1)F(0) ATP synthase produces ATP from ADP in the presence of a proton or sodium gradient. F-type ATPases consist of two structural domains, F(1) containing the extramembraneous catalytic core and F(0) containing the membrane proton channel, linked together by a central stalk and a peripheral stalk. During catalysis, ATP synthesis in the catalytic domain of F(1) is coupled via a rotary mechanism of the central stalk subunits to proton translocation. Its function is as follows. This protein is part of the stalk that links CF(0) to CF(1). It either transmits conformational changes from CF(0) to CF(1) or is implicated in proton conduction. This Actinobacillus pleuropneumoniae serotype 7 (strain AP76) protein is ATP synthase subunit delta.